A 217-amino-acid chain; its full sequence is Probable transaldolase (217 aa).

The active-site Schiff-base intermediate with substrate is the Lys-83.

This sequence belongs to the transaldolase family. Type 3B subfamily.

The protein resides in the cytoplasm. It catalyses the reaction D-sedoheptulose 7-phosphate + D-glyceraldehyde 3-phosphate = D-erythrose 4-phosphate + beta-D-fructose 6-phosphate. Its pathway is carbohydrate degradation; pentose phosphate pathway; D-glyceraldehyde 3-phosphate and beta-D-fructose 6-phosphate from D-ribose 5-phosphate and D-xylulose 5-phosphate (non-oxidative stage): step 2/3. Its function is as follows. Transaldolase is important for the balance of metabolites in the pentose-phosphate pathway. In Caulobacter sp. (strain K31), this protein is Probable transaldolase.